The primary structure comprises 254 residues: Pimeloyl-[acyl-carrier protein] methyl ester esterase (254 aa).

The AB hydrolase-1 domain occupies 14–238 (VVMLHGWGLH…QASHAPFLSH (225 aa)). Residues W20, 80-81 (SL), and 142-146 (FLALQ) contribute to the substrate site. S80 serves as the catalytic Nucleophile. Residues D204 and H232 contribute to the active site. H232 provides a ligand contact to substrate.

Belongs to the AB hydrolase superfamily. Carboxylesterase BioH family. In terms of assembly, monomer.

The protein resides in the cytoplasm. The enzyme catalyses 6-carboxyhexanoyl-[ACP] methyl ester + H2O = 6-carboxyhexanoyl-[ACP] + methanol + H(+). It functions in the pathway cofactor biosynthesis; biotin biosynthesis. In terms of biological role, the physiological role of BioH is to remove the methyl group introduced by BioC when the pimeloyl moiety is complete. It allows to synthesize pimeloyl-ACP via the fatty acid synthetic pathway through the hydrolysis of the ester bonds of pimeloyl-ACP esters. The chain is Pimeloyl-[acyl-carrier protein] methyl ester esterase from Chromobacterium violaceum (strain ATCC 12472 / DSM 30191 / JCM 1249 / CCUG 213 / NBRC 12614 / NCIMB 9131 / NCTC 9757 / MK).